Reading from the N-terminus, the 244-residue chain is Ribosomal RNA large subunit methyltransferase E (244 aa).

A disordered region spans residues 1-23 (MATGGKKSAGRTTGSGPAGGSRN). Glycine 91, tryptophan 93, aspartate 116, aspartate 132, and aspartate 156 together coordinate S-adenosyl-L-methionine. Catalysis depends on lysine 196, which acts as the Proton acceptor.

It belongs to the class I-like SAM-binding methyltransferase superfamily. RNA methyltransferase RlmE family.

Its subcellular location is the cytoplasm. It catalyses the reaction uridine(2552) in 23S rRNA + S-adenosyl-L-methionine = 2'-O-methyluridine(2552) in 23S rRNA + S-adenosyl-L-homocysteine + H(+). Functionally, specifically methylates the uridine in position 2552 of 23S rRNA at the 2'-O position of the ribose in the fully assembled 50S ribosomal subunit. This chain is Ribosomal RNA large subunit methyltransferase E, found in Paramagnetospirillum magneticum (strain ATCC 700264 / AMB-1) (Magnetospirillum magneticum).